The chain runs to 274 residues: Copper chaperone for superoxide dismutase (274 aa).

An HMA domain is found at 11-74 (LCTLEFAVQM…LLEGTGRQAV (64 aa)). The Cu cation site is built by Cys22 and Cys25. A Glycyl lysine isopeptide (Lys-Gly) (interchain with G-Cter in ubiquitin) cross-link involves residue Lys76. Positions 88 to 234 (AAVAILGGPG…LACGIIARSA (147 aa)) are superoxide dismutase-like. Cys141 and Cys227 form a disulfide bridge. Zn(2+)-binding residues include His147, His155, His164, and Asp167. Residues Lys189, Lys216, and Lys241 each participate in a glycyl lysine isopeptide (Lys-Gly) (interchain with G-Cter in ubiquitin) cross-link. Cu cation is bound by residues Cys244 and Cys246. Ser267 bears the Phosphoserine mark.

In the C-terminal section; belongs to the Cu-Zn superoxide dismutase family. As to quaternary structure, homodimer, and heterodimer with SOD1. Interacts with COMMD1. Interacts with XIAP/BIRC4. Interacts with SLC31A1(via C-terminal domain); this interaction is Cu(1+)-mediated. The heterodimer CCS:SOD1 interacts with SLC31A1; this heterotrimer is Cu(1+)-mediated and its maintenance is regulated through SOD1 activation. Cu(2+) serves as cofactor. The cofactor is Zn(2+). Post-translationally, ubiquitinion by XIAP/BIRC4 leads to enhancement of its chaperone activity toward its physiologic target, SOD1, rather than proteasomal degradation. XIAP/BIRC4 preferentially ubiquitinates at Lys-241. In terms of tissue distribution, ubiquitous.

The protein localises to the cytoplasm. Its function is as follows. Delivers copper to copper zinc superoxide dismutase (SOD1). The protein is Copper chaperone for superoxide dismutase of Homo sapiens (Human).